The chain runs to 457 residues: MALWGGRFTQAADQRFKQFNDSLRFDYRLAEQDIVGSVAWSKALVTVGVLSAAEQQQLEEALNVLLEEVRANPQQILASDAEDIHSWVEGKLIDKVGQLGKKLHTGRSRNDQVATDLKLWCKDTVVELLSANRQLQSALVETAQHNQDAVMPGYTHLQRAQPVTFAHWCLAYVEMLARDESRLQDALKRLDVSPLGCGALAGTAYEIDREQLAGWLGFASATRNSLDSVSDRDHVLELLSDASIGMVHLSRFAEDLIFFNSGEANFVELSDRVTSGSSLMPQKKNPDALELIRGKCGRVQGALTGMMMTLKGLPLAYNKDMQEDKEGLFDALDTWLDCLHMATLVLDGIQVKRPRCAEAAQQGYANATELADYLVAKGVPFREAHHIVGEAVVEAIAQGKPLEALPLVDLQKFSPVIADDVYPILSLQSCLDKRAAKGGVSPQQVAQAISDAKARLS.

It belongs to the lyase 1 family. Argininosuccinate lyase subfamily.

The protein localises to the cytoplasm. The catalysed reaction is 2-(N(omega)-L-arginino)succinate = fumarate + L-arginine. It functions in the pathway amino-acid biosynthesis; L-arginine biosynthesis; L-arginine from L-ornithine and carbamoyl phosphate: step 3/3. The polypeptide is Argininosuccinate lyase (Klebsiella pneumoniae (strain 342)).